A 555-amino-acid chain; its full sequence is 2-succinyl-5-enolpyruvyl-6-hydroxy-3-cyclohexene-1-carboxylate synthase (555 aa).

The protein belongs to the TPP enzyme family. MenD subfamily. In terms of assembly, homodimer. The cofactor is Mg(2+). Mn(2+) serves as cofactor. It depends on thiamine diphosphate as a cofactor.

It carries out the reaction isochorismate + 2-oxoglutarate + H(+) = 5-enolpyruvoyl-6-hydroxy-2-succinyl-cyclohex-3-ene-1-carboxylate + CO2. It participates in quinol/quinone metabolism; 1,4-dihydroxy-2-naphthoate biosynthesis; 1,4-dihydroxy-2-naphthoate from chorismate: step 2/7. Its pathway is quinol/quinone metabolism; menaquinone biosynthesis. Its function is as follows. Catalyzes the thiamine diphosphate-dependent decarboxylation of 2-oxoglutarate and the subsequent addition of the resulting succinic semialdehyde-thiamine pyrophosphate anion to isochorismate to yield 2-succinyl-5-enolpyruvyl-6-hydroxy-3-cyclohexene-1-carboxylate (SEPHCHC). This chain is 2-succinyl-5-enolpyruvyl-6-hydroxy-3-cyclohexene-1-carboxylate synthase, found in Kineococcus radiotolerans (strain ATCC BAA-149 / DSM 14245 / SRS30216).